Reading from the N-terminus, the 304-residue chain is Germ cell-specific gene 1-like protein (304 aa).

Topologically, residues 1–8 (MKTTRKCR) are cytoplasmic. A helical membrane pass occupies residues 9–29 (ALLSVGLNLLALLFSTTAFIT). Residues 30 to 112 (TYWCEGTQRV…FIDLAPASER (83 aa)) are Extracellular-facing. A helical membrane pass occupies residues 113-133 (GVLWLSVVSEVLYIMLLVVGF). Residues 134 to 153 (SLMCLELFHSSNVIDGLKLN) are Cytoplasmic-facing. The chain crosses the membrane as a helical span at residues 154–174 (AFAAVFTVLSGLLGMVAHMMY). The Extracellular portion of the chain corresponds to 175–197 (TQVFQITVSLGPEDWRPHTWDYG). The chain crosses the membrane as a helical span at residues 198-218 (WSFCMAWGSFTCCMAASVTTL). Residues 219–304 (NSYTKTVIEF…NTESLGEEQC (86 aa)) are Cytoplasmic-facing. The segment covering 266 to 278 (VDVYPSHGSSHGN) has biased composition (polar residues). Residues 266–304 (VDVYPSHGSSHGNSRGKMRSPPAPVDQGDNTESLGEEQC) are disordered.

The protein belongs to the GSG1 family. As to quaternary structure, component of the AMPAR complex.

It localises to the cell membrane. It is found in the synapse. Functionally, as a component of the AMPAR complex, modifies AMPA receptor (AMPAR) gating. This chain is Germ cell-specific gene 1-like protein (gsg1l), found in Danio rerio (Zebrafish).